A 409-amino-acid chain; its full sequence is Peptidase T (409 aa).

His-78 is a binding site for Zn(2+). Residue Asp-80 is part of the active site. Asp-140 contacts Zn(2+). Glu-174 (proton acceptor) is an active-site residue. Zn(2+) is bound by residues Glu-175, Asp-197, and His-379.

Belongs to the peptidase M20B family. Zn(2+) is required as a cofactor.

The protein resides in the cytoplasm. It catalyses the reaction Release of the N-terminal residue from a tripeptide.. Cleaves the N-terminal amino acid of tripeptides. This chain is Peptidase T, found in Photobacterium profundum (strain SS9).